A 429-amino-acid polypeptide reads, in one-letter code: Z-DNA-binding protein 1 (429 aa).

2 consecutive Z-binding domains span residues 8–70 (PGRE…CLGG) and 103–166 (PQFS…TIYR). The disordered stretch occupies residues 68-107 (LGGTDPEGEGPAELALSSPAERPQQHAATIPETPGPQFSQ). 2 short sequence motifs (RIP homotypic interaction motif (RHIM)) span residues 195–219 (NSWI…RQTV) and 253–277 (DIHM…LHGV). Disordered regions lie at residues 277-299 (VPSE…AAGP) and 339-429 (KMSI…GGGI). A compositionally biased stretch (gly residues) spans 347 to 358 (AGPGGVAGSGEG). Positions 407 to 420 (KAAEGSHYVDEASH) are enriched in basic and acidic residues.

Homodimer. Interacts (via RIP homotypic interaction motif) with RIPK3; leading to RIPK3 activation and necroptosis; interaction is enhanced by CASP6. Interacts (via RIP homotypic interaction motif) with RIPK1. Component of the AIM2 PANoptosome complex, a multiprotein complex that drives inflammatory cell death (PANoptosis). As to quaternary structure, (Microbial infection) Interacts (via RIP homotypic interaction motif/RHIM) with herpes simplex virus 1/HHV-1 protein RIR1/ICP6 (via RHIM); this interaction may induce heteromeric amyloid assemblies and prevent necroptosis activation. Interacts with human herpes simplex virus 1/HHV-1 protein ICP0. Phosphorylated. As to expression, highly expressed in lymphatic tissues including lymph node, leukocytes, tonsil, bone marrow and spleen. Expressed to a lesser extent in thymus, lung and liver.

It localises to the cytoplasm. It is found in the nucleus. Its activity is regulated as follows. ZBP1-dependent necroptosis is normally inhibited by RIPK1: RIPK1 inhibits the ZBP1-induced activation of RIPK3 via FADD-mediated recruitment of CASP8, which cleaves RIPK1 and limits TNF-induced necroptosis. Functionally, key innate sensor that recognizes and binds Z-RNA structures, which are produced by a number of viruses, such as herpesvirus, orthomyxovirus or flavivirus, and triggers different forms of cell death. ZBP1 acts as an essential mediator of pyroptosis, necroptosis and apoptosis (PANoptosis), an integral part of host defense against pathogens, by activating RIPK3, caspase-8 (CASP8), and the NLRP3 inflammasome. Key activator of necroptosis, a programmed cell death process in response to death-inducing TNF-alpha family members, via its ability to bind Z-RNA: once activated upon Z-RNA-binding, ZBP1 interacts and stimulates RIPK3 kinase, which phosphorylates and activates MLKL, triggering execution of programmed necrosis. In addition to TNF-induced necroptosis, necroptosis can also take place in the nucleus in response to orthomyxoviruses infection: ZBP1 recognizes and binds Z-RNA structures that are produced in infected nuclei by orthomyxoviruses, such as the influenza A virus (IAV), leading to ZBP1 activation, RIPK3 stimulation and subsequent MLKL phosphorylation, triggering disruption of the nuclear envelope and leakage of cellular DNA into the cytosol. ZBP1-dependent cell death in response to IAV infection promotes interleukin-1 alpha (IL1A) induction in an NLRP3-inflammasome-independent manner: IL1A expression is required for the optimal interleukin-1 beta (IL1B) production, and together, these cytokines promote infiltration of inflammatory neutrophils to the lung, leading to the formation of neutrophil extracellular traps. In addition to its direct role in driving necroptosis via its ability to sense Z-RNAs, also involved in PANoptosis triggered in response to bacterial infection: component of the AIM2 PANoptosome complex, a multiprotein complex that triggers PANoptosis. Also acts as the apical sensor of fungal infection responsible for activating PANoptosis. Involved in CASP8-mediated cell death via its interaction with RIPK1 but independently of its ability to sense Z-RNAs. In some cell types, also able to restrict viral replication by promoting cell death-independent responses. In response to Zika virus infection in neurons, promotes a cell death-independent pathway that restricts viral replication: together with RIPK3, promotes a death-independent transcriptional program that modifies the cellular metabolism via up-regulation expression of the enzyme ACOD1/IRG1 and production of the metabolite itaconate. Itaconate inhibits the activity of succinate dehydrogenase, generating a metabolic state in neurons that suppresses replication of viral genomes. Its function is as follows. (Microbial infection) In case of herpes simplex virus 1/HHV-1 infection, forms hetero-amyloid structures with HHV-1 protein RIR1/ICP6 which may inhibit ZBP1-mediated necroptosis, thereby preventing host cell death pathway and allowing viral evasion. This chain is Z-DNA-binding protein 1, found in Homo sapiens (Human).